We begin with the raw amino-acid sequence, 375 residues long: 23S rRNA (uracil(747)-C(5))-methyltransferase RlmC (375 aa).

C3, C11, C14, and C87 together coordinate [4Fe-4S] cluster. S-adenosyl-L-methionine is bound by residues Q212, F241, E262, and N307. C334 serves as the catalytic Nucleophile.

It belongs to the class I-like SAM-binding methyltransferase superfamily. RNA M5U methyltransferase family. RlmC subfamily.

The catalysed reaction is uridine(747) in 23S rRNA + S-adenosyl-L-methionine = 5-methyluridine(747) in 23S rRNA + S-adenosyl-L-homocysteine + H(+). Catalyzes the formation of 5-methyl-uridine at position 747 (m5U747) in 23S rRNA. The protein is 23S rRNA (uracil(747)-C(5))-methyltransferase RlmC of Escherichia coli (strain K12 / MC4100 / BW2952).